We begin with the raw amino-acid sequence, 50 residues long: MASHHEITDHKHGEMDIRHQQATFAGFIKGATWVSILSIAVLVFLALANS.

The Cytoplasmic segment spans residues 2-17 (ASHHEITDHKHGEMDI). Residues 18–49 (RHQQATFAGFIKGATWVSILSIAVLVFLALAN) traverse the membrane as a helical segment. Residue Ser50 is a topological domain, periplasmic.

Its subcellular location is the cell inner membrane. The catalysed reaction is 4 Fe(II)-[cytochrome c] + O2 + 8 H(+)(in) = 4 Fe(III)-[cytochrome c] + 2 H2O + 4 H(+)(out). Its function is as follows. Not required for enzymatic activity or proton pumping of the cytochrome c oxidase complex. In Paracoccus denitrificans, this protein is Cytochrome c oxidase subunit 4 (ctaH).